Here is a 111-residue protein sequence, read N- to C-terminus: MKVLVIIALCFFILQTALSEDKYESFESYVEDLKSGNMKGEARECIPLYNDCKEFKYNNNCCKDPEKKYQYKCSCIMCEGGEEQCTCQRKETVENMMKCVRFVKKVVEKVG.

An N-terminal signal peptide occupies residues 1–19 (MKVLVIIALCFFILQTALS). A propeptide spans 20–43 (EDKYESFESYVEDLKSGNMKGEAR) (removed in mature form). Residues 40–43 (GEAR) carry the Processing quadruplet motif motif. Cystine bridges form between cysteine 45-cysteine 62, cysteine 52-cysteine 73, cysteine 61-cysteine 87, cysteine 75-cysteine 85, and cysteine 78-cysteine 99. Position 110 is a valine amide (valine 110).

Belongs to the neurotoxin 19 (CSTX) family. 11 (latartoxin) subfamily. In terms of processing, contains 5 disulfide bonds. Post-translationally, cleavage of the propeptide depends on the processing quadruplet motif (XXXR, with at least one of X being E). In terms of tissue distribution, expressed by the venom gland.

It localises to the secreted. In terms of biological role, insect toxin. The chain is Latartoxin-2b from Lachesana tarabaevi (Spider).